The sequence spans 409 residues: Phosphopentomutase (409 aa).

6 residues coordinate Mn(2+): D10, D308, H313, D349, H350, and H361.

The protein belongs to the phosphopentomutase family. Requires Mn(2+) as cofactor.

Its subcellular location is the cytoplasm. It carries out the reaction 2-deoxy-alpha-D-ribose 1-phosphate = 2-deoxy-D-ribose 5-phosphate. The catalysed reaction is alpha-D-ribose 1-phosphate = D-ribose 5-phosphate. The protein operates within carbohydrate degradation; 2-deoxy-D-ribose 1-phosphate degradation; D-glyceraldehyde 3-phosphate and acetaldehyde from 2-deoxy-alpha-D-ribose 1-phosphate: step 1/2. In terms of biological role, isomerase that catalyzes the conversion of deoxy-ribose 1-phosphate (dRib-1-P) and ribose 1-phosphate (Rib-1-P) to deoxy-ribose 5-phosphate (dRib-5-P) and ribose 5-phosphate (Rib-5-P), respectively. In Buchnera aphidicola subsp. Schizaphis graminum (strain Sg), this protein is Phosphopentomutase.